A 340-amino-acid polypeptide reads, in one-letter code: N-acetyl-gamma-glutamyl-phosphate reductase (340 aa).

Cysteine 146 is a catalytic residue.

This sequence belongs to the NAGSA dehydrogenase family. Type 1 subfamily.

The protein localises to the cytoplasm. It carries out the reaction N-acetyl-L-glutamate 5-semialdehyde + phosphate + NADP(+) = N-acetyl-L-glutamyl 5-phosphate + NADPH + H(+). The protein operates within amino-acid biosynthesis; L-arginine biosynthesis; N(2)-acetyl-L-ornithine from L-glutamate: step 3/4. In terms of biological role, catalyzes the NADPH-dependent reduction of N-acetyl-5-glutamyl phosphate to yield N-acetyl-L-glutamate 5-semialdehyde. This chain is N-acetyl-gamma-glutamyl-phosphate reductase, found in Streptococcus mutans serotype c (strain ATCC 700610 / UA159).